The chain runs to 209 residues: Uracil phosphoribosyltransferase (209 aa).

5-phospho-alpha-D-ribose 1-diphosphate-binding positions include Arg-79, Arg-104, and 131–139 (DPMLATGNS). Residues Ile-194 and 199 to 201 (GDA) each bind uracil. Asp-200 provides a ligand contact to 5-phospho-alpha-D-ribose 1-diphosphate.

Belongs to the UPRTase family. The cofactor is Mg(2+).

It catalyses the reaction UMP + diphosphate = 5-phospho-alpha-D-ribose 1-diphosphate + uracil. The protein operates within pyrimidine metabolism; UMP biosynthesis via salvage pathway; UMP from uracil: step 1/1. Allosterically activated by GTP. Catalyzes the conversion of uracil and 5-phospho-alpha-D-ribose 1-diphosphate (PRPP) to UMP and diphosphate. The protein is Uracil phosphoribosyltransferase of Acidovorax sp. (strain JS42).